Here is a 157-residue protein sequence, read N- to C-terminus: Peptide methionine sulfoxide reductase MsrA (157 aa).

Residue C13 is part of the active site.

Belongs to the MsrA Met sulfoxide reductase family.

The enzyme catalyses L-methionyl-[protein] + [thioredoxin]-disulfide + H2O = L-methionyl-(S)-S-oxide-[protein] + [thioredoxin]-dithiol. The catalysed reaction is [thioredoxin]-disulfide + L-methionine + H2O = L-methionine (S)-S-oxide + [thioredoxin]-dithiol. Its function is as follows. Has an important function as a repair enzyme for proteins that have been inactivated by oxidation. Catalyzes the reversible oxidation-reduction of methionine sulfoxide in proteins to methionine. This chain is Peptide methionine sulfoxide reductase MsrA, found in Methanococcus maripaludis (strain C5 / ATCC BAA-1333).